Here is a 157-residue protein sequence, read N- to C-terminus: Small ribosomal subunit protein uS7 (157 aa).

It belongs to the universal ribosomal protein uS7 family. As to quaternary structure, part of the 30S ribosomal subunit. Contacts proteins S9 and S11.

Functionally, one of the primary rRNA binding proteins, it binds directly to 16S rRNA where it nucleates assembly of the head domain of the 30S subunit. Is located at the subunit interface close to the decoding center, probably blocks exit of the E-site tRNA. The sequence is that of Small ribosomal subunit protein uS7 from Psychrobacter cryohalolentis (strain ATCC BAA-1226 / DSM 17306 / VKM B-2378 / K5).